We begin with the raw amino-acid sequence, 271 residues long: 5-deoxy-glucuronate isomerase (271 aa).

The protein belongs to the isomerase IolB family.

It catalyses the reaction 5-deoxy-D-glucuronate = 5-dehydro-2-deoxy-D-gluconate. The protein operates within polyol metabolism; myo-inositol degradation into acetyl-CoA; acetyl-CoA from myo-inositol: step 4/7. Its function is as follows. Involved in the isomerization of 5-deoxy-glucuronate (5DG) to 5-dehydro-2-deoxy-D-gluconate (DKG or 2-deoxy-5-keto-D-gluconate). This Bacillus velezensis (strain DSM 23117 / BGSC 10A6 / LMG 26770 / FZB42) (Bacillus amyloliquefaciens subsp. plantarum) protein is 5-deoxy-glucuronate isomerase.